Reading from the N-terminus, the 436-residue chain is Chorion-specific transcription factor GCMa (436 aa).

Positions 14–169 (LSWDINDVKL…KLEAEARRAM (156 aa)) form a DNA-binding region, GCM. Zn(2+)-binding residues include Cys-76, Cys-82, Cys-86, Cys-113, Cys-116, Cys-125, His-152, and His-154. Residues 171–202 (KVNTAPSSVSLSLKGSTETRSLPGETQSQGSL) form a disordered region. The span at 174 to 202 (TAPSSVSLSLKGSTETRSLPGETQSQGSL) shows a compositional bias: polar residues.

Post-translationally, polyubiquitinated in the presence of UBE2D2 and FBXW2 (in vitro). Highly expressed in the placenta. Expressed in trophoblast cells of the villi.

Its subcellular location is the nucleus. Transcription factor involved in the control of expression of placental growth factor (PGF) and other placenta-specific genes. Binds to the trophoblast-specific element 2 (TSE2) of the aromatase gene enhancer. Binds to the SYDE1 promoter. Has a central role in mediating the differentiation of trophoblast cells along both the villous and extravillous pathways in placental development. The polypeptide is Chorion-specific transcription factor GCMa (GCM1) (Homo sapiens (Human)).